A 457-amino-acid polypeptide reads, in one-letter code: ATP synthase subunit beta (457 aa).

An ATP-binding site is contributed by 147–154; sequence GGAGVGKT.

Belongs to the ATPase alpha/beta chains family. As to quaternary structure, F-type ATPases have 2 components, CF(1) - the catalytic core - and CF(0) - the membrane proton channel. CF(1) has five subunits: alpha(3), beta(3), gamma(1), delta(1), epsilon(1). CF(0) has three main subunits: a(1), b(2) and c(9-12). The alpha and beta chains form an alternating ring which encloses part of the gamma chain. CF(1) is attached to CF(0) by a central stalk formed by the gamma and epsilon chains, while a peripheral stalk is formed by the delta and b chains.

The protein resides in the cell inner membrane. The enzyme catalyses ATP + H2O + 4 H(+)(in) = ADP + phosphate + 5 H(+)(out). In terms of biological role, produces ATP from ADP in the presence of a proton gradient across the membrane. The catalytic sites are hosted primarily by the beta subunits. The chain is ATP synthase subunit beta from Haemophilus influenzae (strain PittGG).